The primary structure comprises 639 residues: UvrABC system protein C (639 aa).

The region spanning E20–I97 is the GIY-YIG domain. The region spanning K207–V242 is the UVR domain.

The protein belongs to the UvrC family. As to quaternary structure, interacts with UvrB in an incision complex.

The protein localises to the cytoplasm. In terms of biological role, the UvrABC repair system catalyzes the recognition and processing of DNA lesions. UvrC both incises the 5' and 3' sides of the lesion. The N-terminal half is responsible for the 3' incision and the C-terminal half is responsible for the 5' incision. This Rickettsia peacockii (strain Rustic) protein is UvrABC system protein C.